The primary structure comprises 435 residues: Zinc finger CCCH domain-containing protein 10 (435 aa).

The disordered stretch occupies residues 1–36; that stretch reads MPDRDSYANGTGSSGGGPGGGGSEEASGAGTGSGGA. Positions 12–35 are enriched in gly residues; that stretch reads GSSGGGPGGGGSEEASGAGTGSGG. 3 consecutive C3H1-type zinc fingers follow at residues 36–63, 73–99, and 134–161; these read ATSD…HPDM, KNEF…HGSK, and KEEV…HLQR. Residues 166-190 form a disordered region; the sequence is DARGGGGTGGGGSTGSAPPGRRHDL. The span at 168–179 shows a compositional bias: gly residues; the sequence is RGGGGTGGGGST. An omega-N-methylarginine mark is found at Arg-186 and Arg-187. Residues 235–281 are a coiled coil; the sequence is GVECRLLEEENALLRKRVEELKKQVSNLLATNEVLLEQNAQFRNQAK. Positions 315–331 are enriched in polar residues; the sequence is TTLSSQALQPRPVSQQE. The disordered stretch occupies residues 315 to 363; it reads TTLSSQALQPRPVSQQELVAPTGAPAAPPTNAAPPAAPPPPPPHLNPEI. Positions 340 to 359 are enriched in pro residues; the sequence is AAPPTNAAPPAAPPPPPPHL.

It is found in the nucleus. Its function is as follows. Specific regulator of miRNA biogenesis. Binds, via the C3H1-type zinc finger domains, to the binding motif 5'-GCAGCGC-3' on microRNA pri-MIR143 and negatively regulates the processing to mature microRNA. The chain is Zinc finger CCCH domain-containing protein 10 (Zc3h10) from Mus musculus (Mouse).